The chain runs to 1140 residues: Protein shank (1140 aa).

ANK repeat units lie at residues 144–174 (QGET…HVDF), 178–207 (EGQT…SPNY), 211–242 (IGLT…DIGV), 246–275 (HGNH…QIDA), 279–309 (NGNS…HLAV), and 312–341 (QGQT…KSSV). Positions 337-412 (PKSSVPYRGT…ITPSEYGTMR (76 aa)) are disordered. Over residues 351 to 364 (TRRRLSSTITRRRS) the composition is skewed to basic residues. Low complexity predominate over residues 388–412 (SAAPSPSPSRSSRTTITPSEYGTMR). Residues 436 to 529 (ILVIPRGVKG…TITLKVITVD (94 aa)) enclose the PDZ domain. Composition is skewed to polar residues over residues 640–657 (DQES…NSVS) and 687–704 (TSTF…QLSR). Disordered stretches follow at residues 640–673 (DQES…ASSA), 687–856 (TSTF…AASA), 875–902 (QLKK…STTD), 961–993 (KDSG…HSPN), and 1008–1028 (YGQK…SSTV). 2 stretches are compositionally biased toward low complexity: residues 761-775 (QHQN…QQHP) and 784-793 (PQPIQQQQSS). 2 stretches are compositionally biased toward pro residues: residues 794 to 806 (IPPP…PPHC) and 823 to 847 (VPPP…PPPG). Over residues 964 to 974 (GYTSSRTSLEP) the composition is skewed to polar residues. The span at 977 to 988 (SEEKDHRPHFSL) shows a compositional bias: basic and acidic residues. Positions 1015 to 1028 (SVASSSTASSSSTV) are enriched in low complexity. Residues 1078–1140 (WSVDDVIGWL…IESALRGLLQ (63 aa)) form the SAM domain.

It belongs to the SHANK family. Interacts (via PDZ domain) with egl-19 (via C-terminus). As to expression, expressed in the pharynx, pharyngeal-intestinal valve, intestine, rectal epithelial cells, tail neurons, nerve cord and sperm.

It is found in the cell projection. The protein localises to the pseudopodium. It localises to the cytoplasmic vesicle. The protein resides in the postsynaptic density. Functionally, scaffold protein that most likely acts in the postsynaptic density (PSD) of excitatory synapses which orchestrates synapse formation and maintenance at neuromuscular junctions. Associates with and trafficks the L-type calcium channel egl-19 to the cell surface of body wall muscles to ensure the function of the calcium channel and therefore maintain the Ca(2+) current density. The maintenance of Ca(2+) also allows for the downstream regulation of Ca(2+)-induced expression of genes such as gem-4. Plays a role in the regulation of the defecation cycle, and this may be in association with the inositol trisphosphate (IP3) receptor itr-1, which in turn mediates periodic calcium release and muscle contractions. Required for normal fertility and pharyngeal pumping. The protein is Protein shank of Caenorhabditis elegans.